A 290-amino-acid polypeptide reads, in one-letter code: MIRGSIPALVTPFKNGELDLDTLKKLVDWQIAEGSTGLVPVGTTGESPTLSHEEHETVIEAVVQAAAGRVPVIAGAGSNSTTEGIRLIRFAERVGADAALVVTPYYNKPTQAGLMAHFTALHDCCNLPIVIYNIPGRSVVDMTPETMGRLAQLPRIIGVKDATGKIERVSQQRASCGAEFLQLSGEDATALGFNAHGGVGCISVTANVAPRLCAEFQQATLRGDYATALEYQDRLMPLHEAIFLEPGLVGAKYALSQLGLCSDEVRLPLVGLTDPTKARIDAAMRHAGLI.

Residue T44 participates in pyruvate binding. Y132 functions as the Proton donor/acceptor in the catalytic mechanism. Catalysis depends on K160, which acts as the Schiff-base intermediate with substrate. I202 contributes to the pyruvate binding site.

It belongs to the DapA family. As to quaternary structure, homotetramer; dimer of dimers.

It localises to the cytoplasm. It carries out the reaction L-aspartate 4-semialdehyde + pyruvate = (2S,4S)-4-hydroxy-2,3,4,5-tetrahydrodipicolinate + H2O + H(+). It participates in amino-acid biosynthesis; L-lysine biosynthesis via DAP pathway; (S)-tetrahydrodipicolinate from L-aspartate: step 3/4. In terms of biological role, catalyzes the condensation of (S)-aspartate-beta-semialdehyde [(S)-ASA] and pyruvate to 4-hydroxy-tetrahydrodipicolinate (HTPA). This chain is 4-hydroxy-tetrahydrodipicolinate synthase, found in Cereibacter sphaeroides (strain ATCC 17025 / ATH 2.4.3) (Rhodobacter sphaeroides).